We begin with the raw amino-acid sequence, 490 residues long: Ribosomal L1 domain-containing protein 1 (490 aa).

Methionine 1 carries the post-translational modification N-acetylmethionine. A compositionally biased stretch (low complexity) spans 1 to 27 (MEDSASASLSSAAATGTSTSTPAAPTA). The tract at residues 1-33 (MEDSASASLSSAAATGTSTSTPAAPTARKQLDK) is disordered. Residues lysine 120 and lysine 254 each participate in a glycyl lysine isopeptide (Lys-Gly) (interchain with G-Cter in SUMO2) cross-link. Positions 280–293 (LNKKKKEARRKRRE) are enriched in basic residues. A coiled-coil region spans residues 280–313 (LNKKKKEARRKRRERNFEKQKERKKKRQQARKTA). The disordered stretch occupies residues 280-490 (LNKKKKEARR…PKKPKVPQST (211 aa)). A compositionally biased stretch (basic and acidic residues) spans 329–343 (TVKKPESKKEQTPEH). A Phosphothreonine modification is found at threonine 340. The span at 344-353 (GKKKRGRGKA) shows a compositional bias: basic residues. At threonine 358 the chain carries Phosphothreonine. The residue at position 361 (serine 361) is a Phosphoserine. Threonine 375 is subject to Phosphothreonine. A compositionally biased stretch (basic and acidic residues) spans 376 to 385 (PANEKVEIQK). Lysine 380 participates in a covalent cross-link: Glycyl lysine isopeptide (Lys-Gly) (interchain with G-Cter in SUMO2). Phosphoserine is present on residues serine 392 and serine 396. 2 positions are modified to phosphothreonine: threonine 415 and threonine 423. Phosphoserine is present on serine 427. The span at 427 to 460 (SPEKKPKIKEEAVKEKSPSLGKKDARQTPKKPEA) shows a compositional bias: basic and acidic residues. A Glycyl lysine isopeptide (Lys-Gly) (interchain with G-Cter in SUMO2) cross-link involves residue lysine 435. Serine 443 bears the Phosphoserine mark. Residue lysine 461 forms a Glycyl lysine isopeptide (Lys-Gly) (interchain with G-Cter in SUMO2) linkage. At threonine 465 the chain carries Phosphothreonine. Lysine 468 carries the post-translational modification N6-acetyllysine. Serine 469 carries the phosphoserine modification. The segment covering 469 to 490 (SVRKASHTPKKWPKKPKVPQST) has biased composition (basic residues).

The protein belongs to the universal ribosomal protein uL1 family. Highly divergent. In terms of assembly, interacts with ING1 (isoform 2). Interacts with KPNA7 and KPNA2. In terms of tissue distribution, expressed at high intensities in the heart, skeletal muscle, and placenta.

It localises to the nucleus. The protein resides in the nucleolus. In terms of biological role, regulates cellular senescence through inhibition of PTEN translation. Acts as a pro-apoptotic regulator in response to DNA damage. This chain is Ribosomal L1 domain-containing protein 1 (RSL1D1), found in Homo sapiens (Human).